Here is a 349-residue protein sequence, read N- to C-terminus: Isopentenyl-diphosphate delta-isomerase (349 aa).

6 to 7 (RK) contributes to the substrate binding site. FMN contacts are provided by residues 62–64 (AMT), Ser-93, and Asn-122. A substrate-binding site is contributed by Gln-152. A Mg(2+)-binding site is contributed by Glu-153. FMN is bound by residues Lys-184, Thr-214, 259–261 (GVR), and 280–281 (AG).

The protein belongs to the IPP isomerase type 2 family. In terms of assembly, homooctamer. Dimer of tetramers. It depends on FMN as a cofactor. The cofactor is NADPH. Requires Mg(2+) as cofactor.

The protein resides in the cytoplasm. It carries out the reaction isopentenyl diphosphate = dimethylallyl diphosphate. Its function is as follows. Involved in the biosynthesis of isoprenoids. Catalyzes the 1,3-allylic rearrangement of the homoallylic substrate isopentenyl (IPP) to its allylic isomer, dimethylallyl diphosphate (DMAPP). The chain is Isopentenyl-diphosphate delta-isomerase from Geobacillus sp. (strain WCH70).